Reading from the N-terminus, the 198-residue chain is Na(+)-translocating NADH-quinone reductase subunit E (198 aa).

A run of 6 helical transmembrane segments spans residues 11-31 (SIFI…FLAV), 39-59 (FGLG…NNLV), 77-97 (FLNF…LEMV), 110-130 (GIFL…SFMV), 140-160 (IVYG…LAGI), and 176-196 (LGIT…FSGV).

The protein belongs to the NqrDE/RnfAE family. As to quaternary structure, composed of six subunits; NqrA, NqrB, NqrC, NqrD, NqrE and NqrF.

The protein localises to the cell inner membrane. The enzyme catalyses a ubiquinone + n Na(+)(in) + NADH + H(+) = a ubiquinol + n Na(+)(out) + NAD(+). Its function is as follows. NQR complex catalyzes the reduction of ubiquinone-1 to ubiquinol by two successive reactions, coupled with the transport of Na(+) ions from the cytoplasm to the periplasm. NqrA to NqrE are probably involved in the second step, the conversion of ubisemiquinone to ubiquinol. This Vibrio campbellii (strain ATCC BAA-1116) protein is Na(+)-translocating NADH-quinone reductase subunit E.